Here is a 629-residue protein sequence, read N- to C-terminus: 1-deoxy-D-xylulose-5-phosphate synthase (629 aa).

Thiamine diphosphate is bound by residues histidine 72 and 113-115; that span reads GHS. Aspartate 144 serves as a coordination point for Mg(2+). Residues 145-146, asparagine 173, tyrosine 284, and glutamate 366 contribute to the thiamine diphosphate site; that span reads GA. Residue asparagine 173 participates in Mg(2+) binding.

The protein belongs to the transketolase family. DXPS subfamily. Homodimer. Requires Mg(2+) as cofactor. The cofactor is thiamine diphosphate.

The enzyme catalyses D-glyceraldehyde 3-phosphate + pyruvate + H(+) = 1-deoxy-D-xylulose 5-phosphate + CO2. Its pathway is metabolic intermediate biosynthesis; 1-deoxy-D-xylulose 5-phosphate biosynthesis; 1-deoxy-D-xylulose 5-phosphate from D-glyceraldehyde 3-phosphate and pyruvate: step 1/1. Its function is as follows. Catalyzes the acyloin condensation reaction between C atoms 2 and 3 of pyruvate and glyceraldehyde 3-phosphate to yield 1-deoxy-D-xylulose-5-phosphate (DXP). In Halalkalibacterium halodurans (strain ATCC BAA-125 / DSM 18197 / FERM 7344 / JCM 9153 / C-125) (Bacillus halodurans), this protein is 1-deoxy-D-xylulose-5-phosphate synthase.